Consider the following 323-residue polypeptide: Beta-ketoacyl-[acyl-carrier-protein] synthase III (323 aa).

Active-site residues include Cys114 and His250. Residues 251-255 (QANKR) form an ACP-binding region. Asn280 is a catalytic residue.

It belongs to the thiolase-like superfamily. FabH family. As to quaternary structure, homodimer.

Its subcellular location is the cytoplasm. The catalysed reaction is malonyl-[ACP] + acetyl-CoA + H(+) = 3-oxobutanoyl-[ACP] + CO2 + CoA. It functions in the pathway lipid metabolism; fatty acid biosynthesis. Its function is as follows. Catalyzes the condensation reaction of fatty acid synthesis by the addition to an acyl acceptor of two carbons from malonyl-ACP. Catalyzes the first condensation reaction which initiates fatty acid synthesis and may therefore play a role in governing the total rate of fatty acid production. Possesses both acetoacetyl-ACP synthase and acetyl transacylase activities. Its substrate specificity determines the biosynthesis of branched-chain and/or straight-chain of fatty acids. The sequence is that of Beta-ketoacyl-[acyl-carrier-protein] synthase III from Hyphomonas neptunium (strain ATCC 15444).